A 308-amino-acid chain; its full sequence is Alpha/beta hydrolase domain-containing protein WAV2 (308 aa).

Residues 6-26 (SALFYGFGGIVVAGVALLVAF) traverse the membrane as a helical segment. Residues serine 159, aspartate 243, and arginine 308 each act as charge relay system in the active site.

Belongs to the serine esterase family. In terms of tissue distribution, expressed in roots, rosette leaves, stems and flowers.

The protein localises to the cell membrane. Involved in the regulation of root growth. Involved in the suppression of the root bending in response to touch stimuli, gravity and light. Negatively regulates stimulus-induced root bending through inhibition of root tip rotation. The protein is Alpha/beta hydrolase domain-containing protein WAV2 of Arabidopsis thaliana (Mouse-ear cress).